Reading from the N-terminus, the 634-residue chain is Threonine--tRNA ligase (634 aa).

Positions M1–T61 constitute a TGS domain. The catalytic stretch occupies residues D241 to P532. Residues C332, H383, and H509 each contribute to the Zn(2+) site.

The protein belongs to the class-II aminoacyl-tRNA synthetase family. Homodimer. Zn(2+) serves as cofactor.

The protein localises to the cytoplasm. The catalysed reaction is tRNA(Thr) + L-threonine + ATP = L-threonyl-tRNA(Thr) + AMP + diphosphate + H(+). In terms of biological role, catalyzes the attachment of threonine to tRNA(Thr) in a two-step reaction: L-threonine is first activated by ATP to form Thr-AMP and then transferred to the acceptor end of tRNA(Thr). Also edits incorrectly charged L-seryl-tRNA(Thr). The polypeptide is Threonine--tRNA ligase (Francisella tularensis subsp. tularensis (strain WY96-3418)).